The sequence spans 328 residues: GTPase Obg (328 aa).

In terms of domain architecture, Obg spans 2 to 160; that stretch reads YNFKDSVSIT…LNVRLELFLV (159 aa). The region spanning 161–326 is the OBG-type G domain; that stretch reads ADIGLVGLPN…LIKEFFVLAK (166 aa). GTP contacts are provided by residues 167–174, 192–196, 213–216, 280–283, and 307–309; these read GLPNAGKS, FTTKI, DIPG, NKLD, and SIY. Residues S174 and T194 each coordinate Mg(2+).

The protein belongs to the TRAFAC class OBG-HflX-like GTPase superfamily. OBG GTPase family. Monomer. It depends on Mg(2+) as a cofactor.

It localises to the cytoplasm. Functionally, an essential GTPase which binds GTP, GDP and possibly (p)ppGpp with moderate affinity, with high nucleotide exchange rates and a fairly low GTP hydrolysis rate. Plays a role in control of the cell cycle, stress response, ribosome biogenesis and in those bacteria that undergo differentiation, in morphogenesis control. This chain is GTPase Obg, found in Borreliella afzelii (strain PKo) (Borrelia afzelii).